The following is a 771-amino-acid chain: Rho guanine nucleotide exchange factor 6 (771 aa).

Residues 1–111 enclose the Calponin-homology (CH) domain; it reads MNPEERLVTW…TLLAVNKATE (111 aa). The segment at 115–157 is disordered; it reads SERPCGRSSSLSAATSSQTNPQVAVPSTAPEQHSEEKAEMTEN. Over residues 122-131 the composition is skewed to low complexity; that stretch reads SSSLSAATSS. Serine 126 bears the Phosphoserine mark. Threonine 133 bears the Phosphothreonine mark. In terms of domain architecture, SH3 spans 159–218; sequence SHQLIVKARFNFKQTNEDELSVCKGDIIYVTRVEEGGWWEGTLNGRTGWFPSNYVREIKP. Serine 224 is modified (phosphoserine). One can recognise a DH domain in the interval 240–420; the sequence is YYTVVLQNIL…KTLMGQCQDL (181 aa). The 106-residue stretch at 442–547 folds into the PH domain; it reads DIKTLGNVIF…WMEQLNRLTK (106 aa). At serine 487 the chain carries Phosphoserine. Low complexity predominate over residues 556-572; it reads SKTSSSSCSTHSSFSST. The interval 556 to 580 is disordered; sequence SKTSSSSCSTHSSFSSTGQPRGPLE. Residues serine 639 and serine 679 each carry the phosphoserine modification.

Interacts with PAK kinases through the SH3 domain. Interacts with GIT1. Component of cytoplasmic complexes, which also contain PXN, GIT1 and PAK1. Interacts with BIN2. Identified in a complex with BIN2 and GIT2. Interacts with PARVB. Interacts with PARVG; the guanine nucleotide exchange factor activity of ARHGEF6 is essential for PARVG-induced enhancement of cell spreading. In terms of tissue distribution, detected in adult heart, spleen, lung, skeletal muscle, kidney and testis. Detected throughout embryogenesis.

It localises to the cell projection. The protein localises to the lamellipodium. Functionally, acts as a RAC1 guanine nucleotide exchange factor (GEF). This chain is Rho guanine nucleotide exchange factor 6 (Arhgef6), found in Mus musculus (Mouse).